The primary structure comprises 476 residues: tRNA-2-methylthio-N(6)-dimethylallyladenosine synthase (476 aa).

Over residues 1 to 14 (MTEVVHLHMPEEAR) the composition is skewed to basic and acidic residues. Residues 1-20 (MTEVVHLHMPEEARATQSRD) form a disordered region. Residues 26-147 (RRYYVWTVGC…APNPIYQLEE (122 aa)) enclose the MTTase N-terminal domain. [4Fe-4S] cluster is bound by residues cysteine 35, cysteine 71, cysteine 105, cysteine 170, cysteine 174, and cysteine 177. A Radical SAM core domain is found at 156 to 390 (DHPPVSVHVP…ERLQEQIAAE (235 aa)). Residues 393–453 (ARFLHQTVEV…PWSLQGVLAR (61 aa)) form the TRAM domain.

The protein belongs to the methylthiotransferase family. MiaB subfamily. Monomer. [4Fe-4S] cluster serves as cofactor.

The protein resides in the cytoplasm. It carries out the reaction N(6)-dimethylallyladenosine(37) in tRNA + (sulfur carrier)-SH + AH2 + 2 S-adenosyl-L-methionine = 2-methylsulfanyl-N(6)-dimethylallyladenosine(37) in tRNA + (sulfur carrier)-H + 5'-deoxyadenosine + L-methionine + A + S-adenosyl-L-homocysteine + 2 H(+). Its function is as follows. Catalyzes the methylthiolation of N6-(dimethylallyl)adenosine (i(6)A), leading to the formation of 2-methylthio-N6-(dimethylallyl)adenosine (ms(2)i(6)A) at position 37 in tRNAs that read codons beginning with uridine. The protein is tRNA-2-methylthio-N(6)-dimethylallyladenosine synthase of Roseiflexus sp. (strain RS-1).